A 407-amino-acid polypeptide reads, in one-letter code: Protoasukamycin 4-monooxygenase (407 aa).

In terms of assembly, does not interact with AsuE2, suggesting a possible transient interaction between the two enzymes instead of formation of a stable complex. It depends on FMN as a cofactor. The cofactor is FAD. Riboflavin serves as cofactor.

It catalyses the reaction protoasukamycin + NADH + O2 + H(+) = 4-hydroxyprotoasukamycin + NAD(+) + H2O. It participates in antibiotic biosynthesis. When flavin concentration is low, activity is enhanced by the presence of the NADH-dependent flavin reductase AsuE2. In the presence of abundant flavin, activity of AsuE1 is not affected by AsuE2. Functionally, involved in the biosynthesis of the antibiotic asukamycin. Catalyzes the conversion of protoasukamycin to 4-hydroxyprotoasukamycin. Can also convert some protoasukamycin derivatives into their corresponding 4-hydroxyprotoasukamycin derivatives. Can also use NADPH, but catalytic efficiency is 50-fold higher with NADH. The polypeptide is Protoasukamycin 4-monooxygenase (Streptomyces nodosus subsp. asukaensis).